The primary structure comprises 421 residues: UDP-N-acetylglucosamine 1-carboxyvinyltransferase (421 aa).

22–23 (KN) serves as a coordination point for phosphoenolpyruvate. Arginine 93 lines the UDP-N-acetyl-alpha-D-glucosamine pocket. Cysteine 117 (proton donor) is an active-site residue. Cysteine 117 is modified (2-(S-cysteinyl)pyruvic acid O-phosphothioketal). UDP-N-acetyl-alpha-D-glucosamine-binding positions include 122-126 (RPVDL), aspartate 308, and isoleucine 330.

It belongs to the EPSP synthase family. MurA subfamily.

The protein localises to the cytoplasm. The enzyme catalyses phosphoenolpyruvate + UDP-N-acetyl-alpha-D-glucosamine = UDP-N-acetyl-3-O-(1-carboxyvinyl)-alpha-D-glucosamine + phosphate. The protein operates within cell wall biogenesis; peptidoglycan biosynthesis. Cell wall formation. Adds enolpyruvyl to UDP-N-acetylglucosamine. The polypeptide is UDP-N-acetylglucosamine 1-carboxyvinyltransferase (Pseudomonas syringae pv. tomato (strain ATCC BAA-871 / DC3000)).